Here is a 755-residue protein sequence, read N- to C-terminus: Xaa-Pro dipeptidyl-peptidase (755 aa).

Active-site charge relay system residues include Ser348, Asp468, and His498.

It belongs to the peptidase S15 family. In terms of assembly, homodimer.

The protein localises to the cytoplasm. It carries out the reaction Hydrolyzes Xaa-Pro-|- bonds to release unblocked, N-terminal dipeptides from substrates including Ala-Pro-|-p-nitroanilide and (sequentially) Tyr-Pro-|-Phe-Pro-|-Gly-Pro-|-Ile.. Its function is as follows. Removes N-terminal dipeptides sequentially from polypeptides having unsubstituted N-termini provided that the penultimate residue is proline. The protein is Xaa-Pro dipeptidyl-peptidase of Streptococcus thermophilus (strain ATCC BAA-250 / LMG 18311).